A 231-amino-acid chain; its full sequence is Orotate phosphoribosyltransferase (231 aa).

Residues K27, 79 to 80, R106, K107, K110, H112, and 133 to 141 each bind 5-phospho-alpha-D-ribose 1-diphosphate; these read YK and DDVMTAGTA. Residues T137 and R166 each coordinate orotate.

This sequence belongs to the purine/pyrimidine phosphoribosyltransferase family. PyrE subfamily. In terms of assembly, homodimer. Mg(2+) serves as cofactor.

It catalyses the reaction orotidine 5'-phosphate + diphosphate = orotate + 5-phospho-alpha-D-ribose 1-diphosphate. It functions in the pathway pyrimidine metabolism; UMP biosynthesis via de novo pathway; UMP from orotate: step 1/2. Its function is as follows. Catalyzes the transfer of a ribosyl phosphate group from 5-phosphoribose 1-diphosphate to orotate, leading to the formation of orotidine monophosphate (OMP). This Bifidobacterium longum (strain DJO10A) protein is Orotate phosphoribosyltransferase.